The following is a 428-amino-acid chain: Glutamate-1-semialdehyde 2,1-aminomutase (428 aa).

Lys267 is subject to N6-(pyridoxal phosphate)lysine.

The protein belongs to the class-III pyridoxal-phosphate-dependent aminotransferase family. HemL subfamily. Homodimer. Pyridoxal 5'-phosphate serves as cofactor.

It is found in the cytoplasm. It catalyses the reaction (S)-4-amino-5-oxopentanoate = 5-aminolevulinate. It functions in the pathway porphyrin-containing compound metabolism; protoporphyrin-IX biosynthesis; 5-aminolevulinate from L-glutamyl-tRNA(Glu): step 2/2. It participates in porphyrin-containing compound metabolism; chlorophyll biosynthesis. This Prochlorococcus marinus (strain NATL1A) protein is Glutamate-1-semialdehyde 2,1-aminomutase.